Consider the following 182-residue polypeptide: MYHVVAATINPAKIKAISQAFSDIFGAGSCHIEGVEVDSGVAAQPISNTETRTGARQRVMNARRVRPEADFWVAIEAGIEEDTAFAWMVVENQKLRGESRSASFTLPAIVMKGIHQGRELGDEMARLTGIDNIKHKGGAIGAFTAGHLTRSSVYHQALILALCPFHNDIYQRKADDEDSDLI.

Residues aspartate 38 and glutamate 68 each contribute to the Mg(2+) site. Residue 68 to 69 participates in substrate binding; it reads EA.

This sequence belongs to the YjjX NTPase family. As to quaternary structure, homodimer. Mg(2+) is required as a cofactor. It depends on Mn(2+) as a cofactor.

It catalyses the reaction XTP + H2O = XDP + phosphate + H(+). It carries out the reaction ITP + H2O = IDP + phosphate + H(+). In terms of biological role, phosphatase that hydrolyzes non-canonical purine nucleotides such as XTP and ITP to their respective diphosphate derivatives. Probably excludes non-canonical purines from DNA/RNA precursor pool, thus preventing their incorporation into DNA/RNA and avoiding chromosomal lesions. In Erwinia tasmaniensis (strain DSM 17950 / CFBP 7177 / CIP 109463 / NCPPB 4357 / Et1/99), this protein is Inosine/xanthosine triphosphatase.